We begin with the raw amino-acid sequence, 342 residues long: tRNA N6-adenosine threonylcarbamoyltransferase (342 aa).

2 residues coordinate Fe cation: His115 and His119. Substrate contacts are provided by residues Ile138–Gly142, Asp171, Gly184, Asp188, and Asn276. Residue Asp304 participates in Fe cation binding.

It belongs to the KAE1 / TsaD family. It depends on Fe(2+) as a cofactor.

Its subcellular location is the cytoplasm. It catalyses the reaction L-threonylcarbamoyladenylate + adenosine(37) in tRNA = N(6)-L-threonylcarbamoyladenosine(37) in tRNA + AMP + H(+). Functionally, required for the formation of a threonylcarbamoyl group on adenosine at position 37 (t(6)A37) in tRNAs that read codons beginning with adenine. Is involved in the transfer of the threonylcarbamoyl moiety of threonylcarbamoyl-AMP (TC-AMP) to the N6 group of A37, together with TsaE and TsaB. TsaD likely plays a direct catalytic role in this reaction. The polypeptide is tRNA N6-adenosine threonylcarbamoyltransferase (Endomicrobium trichonymphae).